The primary structure comprises 252 residues: Mitochondrial intermembrane space import and assembly protein 40 (252 aa).

Residues 1 to 31 (MYRTISRSSSGLIRQSTARLTRQLSTTRTTP) constitute a mitochondrion transit peptide. At 32–37 (SQYNSK) the chain is on the mitochondrial matrix side. A helical; Signal-anchor for type II membrane protein transmembrane segment spans residues 38 to 54 (LLLGVLGTGALAFGYFS). Topologically, residues 55-252 (QQSSLIQNAS…DKVKPNTKSD (198 aa)) are mitochondrial intermembrane. Basic and acidic residues predominate over residues 90-123 (RQEKVIKENEQKTKKAEDAKTSSESKANVADKKS). The segment at 90–143 (RQEKVIKENEQKTKKAEDAKTSSESKANVADKKSNSQPEGEPEGEGKQEAAFNP) is disordered. 3 disulfide bridges follow: Cys-152/Cys-154, Cys-163/Cys-196, and Cys-173/Cys-186. The region spanning 160-204 (HGPCGEEFKEAFSCFVFSETEPKGIDCIKKFENMRSCFKRYPEHY) is the CHCH domain. 2 short sequence motifs (cx9C motif) span residues 163–173 (CGEEFKEAFSC) and 186–196 (CIKKFENMRSC). Residues 230 to 252 (EPAIEQIEQGIKEDKVKPNTKSD) form a disordered region. Over residues 239–252 (GIKEDKVKPNTKSD) the composition is skewed to basic and acidic residues.

In terms of assembly, monomer. Cu(2+) serves as cofactor. Zn(2+) is required as a cofactor.

It is found in the mitochondrion inner membrane. In terms of biological role, required for the import and folding of small cysteine-containing proteins (small Tim) in the mitochondrial intermembrane space (IMS). Forms a redox cycle with ERV1 that involves a disulfide relay system. Precursor proteins to be imported into the IMS are translocated in their reduced form into the mitochondria. The oxidized form of MIA40 forms a transient intermolecular disulfide bridge with the reduced precursor protein, resulting in oxidation of the precursor protein that now contains an intramolecular disulfide bond and is able to undergo folding in the IMS. This Candida albicans (strain SC5314 / ATCC MYA-2876) (Yeast) protein is Mitochondrial intermembrane space import and assembly protein 40 (MIA40).